The chain runs to 157 residues: Eukaryotic translation initiation factor 5A-1 (157 aa).

Position 52 is a hypusine (K52). Phosphoserine is present on residues S75 and S77. T78 carries the post-translational modification Phosphothreonine.

This sequence belongs to the eIF-5A family. Lys-52 undergoes hypusination, a unique post-translational modification that consists in the addition of a butylamino group from spermidine to lysine side chain, leading to the formation of the unusual amino acid hypusine. eIF-5As are the only known proteins to undergo this modification, which is essential for their function.

Its subcellular location is the cytoplasm. Functionally, translation factor that promotes translation elongation and termination, particularly upon ribosome stalling at specific amino acid sequence contexts. Binds between the exit (E) and peptidyl (P) site of the ribosome and promotes rescue of stalled ribosome: specifically required for efficient translation of polyproline-containing peptides as well as other motifs that stall the ribosome. Acts as a ribosome quality control (RQC) cofactor by joining the RQC complex to facilitate peptidyl transfer during CAT tailing step. The sequence is that of Eukaryotic translation initiation factor 5A-1 (tif51a) from Schizosaccharomyces pombe (strain 972 / ATCC 24843) (Fission yeast).